A 230-amino-acid chain; its full sequence is Uracil-DNA glycosylase (230 aa).

Asp70 functions as the Proton acceptor in the catalytic mechanism.

This sequence belongs to the uracil-DNA glycosylase (UDG) superfamily. UNG family.

The protein localises to the cytoplasm. It catalyses the reaction Hydrolyzes single-stranded DNA or mismatched double-stranded DNA and polynucleotides, releasing free uracil.. Excises uracil residues from the DNA which can arise as a result of misincorporation of dUMP residues by DNA polymerase or due to deamination of cytosine. The polypeptide is Uracil-DNA glycosylase (Pseudomonas savastanoi pv. phaseolicola (strain 1448A / Race 6) (Pseudomonas syringae pv. phaseolicola (strain 1448A / Race 6))).